The chain runs to 59 residues: uncharacterized protein (59 aa).

The first 21 residues, 1–21, serve as a signal peptide directing secretion; the sequence is MYLFYVLLSSLFLSALIYVIG. At 22–24 the chain is on the extracellular side; sequence KSH. A helical transmembrane segment spans residues 25–45; that stretch reads PNLFMFISLFVNVVTILYLVF. The Cytoplasmic segment spans residues 46 to 59; it reads KDYGQYIIAKPINT.

The protein resides in the host membrane. This is an uncharacterized protein from Acidianus convivator (ABV).